Consider the following 459-residue polypeptide: Bifunctional protein GlmU (459 aa).

Residues 1 to 230 (MSNRFAVILA…FDETLGVNDR (230 aa)) are pyrophosphorylase. Residues 9–12 (LAAG), lysine 23, glutamine 73, and 78–79 (GT) contribute to the UDP-N-acetyl-alpha-D-glucosamine site. Aspartate 103 is a Mg(2+) binding site. 4 residues coordinate UDP-N-acetyl-alpha-D-glucosamine: glycine 140, glutamate 155, asparagine 170, and asparagine 228. Position 228 (asparagine 228) interacts with Mg(2+). Residues 231–251 (VALSQAEIIMKNRINRKNMVN) are linker. The tract at residues 252-459 (GVTIIDPSNT…VDQLLNKKKS (208 aa)) is N-acetyltransferase. UDP-N-acetyl-alpha-D-glucosamine is bound by residues arginine 333 and lysine 351. Histidine 363 (proton acceptor) is an active-site residue. 2 residues coordinate UDP-N-acetyl-alpha-D-glucosamine: tyrosine 366 and asparagine 377. Acetyl-CoA contacts are provided by residues 386 to 387 (NY), alanine 423, and arginine 440.

In the N-terminal section; belongs to the N-acetylglucosamine-1-phosphate uridyltransferase family. The protein in the C-terminal section; belongs to the transferase hexapeptide repeat family. As to quaternary structure, homotrimer. Requires Mg(2+) as cofactor.

The protein resides in the cytoplasm. The enzyme catalyses alpha-D-glucosamine 1-phosphate + acetyl-CoA = N-acetyl-alpha-D-glucosamine 1-phosphate + CoA + H(+). It catalyses the reaction N-acetyl-alpha-D-glucosamine 1-phosphate + UTP + H(+) = UDP-N-acetyl-alpha-D-glucosamine + diphosphate. The protein operates within nucleotide-sugar biosynthesis; UDP-N-acetyl-alpha-D-glucosamine biosynthesis; N-acetyl-alpha-D-glucosamine 1-phosphate from alpha-D-glucosamine 6-phosphate (route II): step 2/2. It functions in the pathway nucleotide-sugar biosynthesis; UDP-N-acetyl-alpha-D-glucosamine biosynthesis; UDP-N-acetyl-alpha-D-glucosamine from N-acetyl-alpha-D-glucosamine 1-phosphate: step 1/1. Its pathway is bacterial outer membrane biogenesis; LPS lipid A biosynthesis. Catalyzes the last two sequential reactions in the de novo biosynthetic pathway for UDP-N-acetylglucosamine (UDP-GlcNAc). The C-terminal domain catalyzes the transfer of acetyl group from acetyl coenzyme A to glucosamine-1-phosphate (GlcN-1-P) to produce N-acetylglucosamine-1-phosphate (GlcNAc-1-P), which is converted into UDP-GlcNAc by the transfer of uridine 5-monophosphate (from uridine 5-triphosphate), a reaction catalyzed by the N-terminal domain. This chain is Bifunctional protein GlmU, found in Bacillus cereus (strain ATCC 14579 / DSM 31 / CCUG 7414 / JCM 2152 / NBRC 15305 / NCIMB 9373 / NCTC 2599 / NRRL B-3711).